Reading from the N-terminus, the 227-residue chain is Ornithine decarboxylase antizyme 1 (227 aa).

Belongs to the ODC antizyme family. Interacts with ODC1 and thereby sterically blocks ODC homodimerization. Forms a ternary complex with PSMB4 and OAZ1 before PSMB4 is incorporated into the 20S proteasome. Interacts with AZIN2; this interaction disrupts the interaction between the antizyme and ODC1. Interacts with FAM171A1.

Ornithine decarboxylase (ODC) antizyme protein that negatively regulates ODC activity and intracellular polyamine biosynthesis and uptake in response to increased intracellular polyamine levels. Binds to ODC monomers, inhibiting the assembly of the functional ODC homodimer, and targets the monomers for ubiquitin-independent proteolytic destruction by the 26S proteasome. Triggers ODC degradation by inducing the exposure of a cryptic proteasome-interacting surface of ODC. Stabilizes AZIN2 by interfering with its ubiquitination. Also inhibits cellular uptake of polyamines by inactivating the polyamine uptake transporter. SMAD1/OAZ1/PSMB4 complex mediates the degradation of the CREBBP/EP300 repressor SNIP1. Involved in the translocation of AZIN2 from ER-Golgi intermediate compartment (ERGIC) to the cytosol. The protein is Ornithine decarboxylase antizyme 1 (Oaz1) of Mus musculus (Mouse).